The chain runs to 128 residues: Putative pre-16S rRNA nuclease (128 aa).

It belongs to the YqgF nuclease family.

It localises to the cytoplasm. In terms of biological role, could be a nuclease involved in processing of the 5'-end of pre-16S rRNA. This Sulfurovum sp. (strain NBC37-1) protein is Putative pre-16S rRNA nuclease.